We begin with the raw amino-acid sequence, 309 residues long: Uridylate-specific endoribonuclease C (309 aa).

The N-terminal stretch at 1–22 is a signal peptide; sequence MASGYDFGWIPVLLSLFTLTDA. The region spanning 27–303 is the EndoU domain; that stretch reads VNQELSNIFN…IGTAYPKLLS (277 aa). Asn53 and Asn121 each carry an N-linked (GlcNAc...) asparagine glycan. Residues His181, His197, and Lys242 contribute to the active site.

The protein belongs to the ENDOU family. As to quaternary structure, monomer. The cofactor is Mn(2+).

Its subcellular location is the secreted. The enzyme catalyses ribonucleotidyl-uridine-RNA = a 5'-end dephospho-uridine-RNA + a 3'-end 2',3'-cyclophospho-ribonucleotide-RNA. Endoribonuclease that cleaves single-stranded RNAs at 5' of uridylates and releases a product with a 2',3'-cyclic phosphate at the 3'-end. The UU and GU sites are more efficiently cleaved than CU and AU sites. This chain is Uridylate-specific endoribonuclease C (endouc), found in Danio rerio (Zebrafish).